Reading from the N-terminus, the 223-residue chain is Transmembrane protein 235 (223 aa).

The first 28 residues, 1–28 (MARLGALLLAAALGALLSFALLAAAVAS), serve as a signal peptide directing secretion. N-linked (GlcNAc...) asparagine glycosylation is present at Asn-41. Transmembrane regions (helical) follow at residues 96–116 (VIVVLPLSLVLLVCGWICGLL), 126–146 (LLFTGCYFLLGSVLTLAGVSI), and 176–196 (WSMALAWGSCALEAFSGTLLL).

It belongs to the PMP-22/EMP/MP20 family. Post-translationally, N-glycosylated.

The protein localises to the membrane. The protein resides in the endoplasmic reticulum. The polypeptide is Transmembrane protein 235 (TMEM235) (Homo sapiens (Human)).